The sequence spans 216 residues: Octanoyltransferase (216 aa).

The BPL/LPL catalytic domain maps to 35–213 (NSNPDFIWIG…TIEEEFNFDF (179 aa)). Residues 77 to 84 (RGGEVTCH), 144 to 146 (SIG), and 157 to 159 (GFS) contribute to the substrate site. Cys175 functions as the Acyl-thioester intermediate in the catalytic mechanism.

Belongs to the LipB family.

It localises to the cytoplasm. The enzyme catalyses octanoyl-[ACP] + L-lysyl-[protein] = N(6)-octanoyl-L-lysyl-[protein] + holo-[ACP] + H(+). Its pathway is protein modification; protein lipoylation via endogenous pathway; protein N(6)-(lipoyl)lysine from octanoyl-[acyl-carrier-protein]: step 1/2. Catalyzes the transfer of endogenously produced octanoic acid from octanoyl-acyl-carrier-protein onto the lipoyl domains of lipoate-dependent enzymes. Lipoyl-ACP can also act as a substrate although octanoyl-ACP is likely to be the physiological substrate. This chain is Octanoyltransferase, found in Prochlorococcus marinus (strain MIT 9301).